The following is a 423-amino-acid chain: Levansucrase (423 aa).

Sucrose contacts are provided by W47, D48, S119, R193, and D194. The Nucleophile role is filled by D48. E278 acts as the Proton donor/acceptor in catalysis.

This sequence belongs to the glycosyl hydrolase 68 family.

The protein resides in the secreted. It carries out the reaction [6)-beta-D-fructofuranosyl-(2-&gt;](n) alpha-D-glucopyranoside + sucrose = [6)-beta-D-fructofuranosyl-(2-&gt;](n+1) alpha-D-glucopyranoside + D-glucose. Its function is as follows. Catalyzes the synthesis of levan, a fructose polymer, by transferring the fructosyl moiety from sucrose to a growing acceptor molecule. The protein is Levansucrase of Zymomonas mobilis subsp. mobilis (strain ATCC 10988 / DSM 424 / LMG 404 / NCIMB 8938 / NRRL B-806 / ZM1).